The chain runs to 229 residues: MSKLSHSEVLIMIQGGLVVSCQPVDDGPMDQPAIVAAMAQAAIVGGAVGVRIEGVQNLKATRPMVTAPIIAIVKRDLPESAVRITPFLADIDQLAAAGADIIAVDGTDRERPVAVVAALERIHAQGCLAMADCSTLAEGLYCQQLGFDIIGSTMSGYTGGELPVEPDYQLVKDLKSAGCYVMAEGRYNSPALAKSAMQMGADCVTVGSALTRLEHMVSWFAVAVQSAKE.

The protein belongs to the NanE family.

The catalysed reaction is an N-acyl-D-glucosamine 6-phosphate = an N-acyl-D-mannosamine 6-phosphate. It functions in the pathway amino-sugar metabolism; N-acetylneuraminate degradation; D-fructose 6-phosphate from N-acetylneuraminate: step 3/5. Functionally, converts N-acetylmannosamine-6-phosphate (ManNAc-6-P) to N-acetylglucosamine-6-phosphate (GlcNAc-6-P). This chain is Putative N-acetylmannosamine-6-phosphate 2-epimerase, found in Haemophilus ducreyi (strain 35000HP / ATCC 700724).